We begin with the raw amino-acid sequence, 180 residues long: Ribulose bisphosphate carboxylase small subunit, chloroplastic 2 (180 aa).

The transit peptide at 1–56 (MASSVLSSAAVATVSRTPAQASMVAPFTGLKSTVGFPATKKNDDITSLASNGGRVQ) directs the protein to the chloroplast.

It belongs to the RuBisCO small chain family. Heterohexadecamer of 8 large and 8 small subunits.

The protein localises to the plastid. It localises to the chloroplast. RuBisCO catalyzes two reactions: the carboxylation of D-ribulose 1,5-bisphosphate, the primary event in carbon dioxide fixation, as well as the oxidative fragmentation of the pentose substrate. Both reactions occur simultaneously and in competition at the same active site. Although the small subunit is not catalytic it is essential for maximal activity. The protein is Ribulose bisphosphate carboxylase small subunit, chloroplastic 2 of Spinacia oleracea (Spinach).